The primary structure comprises 629 residues: Phosphoglucomutase, chloroplastic (629 aa).

Residues 1-69 (MSSTYARFDT…SSSSGPIIAG (69 aa)) constitute a chloroplast transit peptide. 2 residues coordinate alpha-D-glucose 1,6-bisphosphate: arginine 94 and serine 187. The active-site Phosphoserine intermediate is the serine 187. Mg(2+) contacts are provided by serine 187, aspartate 352, aspartate 354, and aspartate 356. Serine 187 is subject to Phosphoserine. Alpha-D-glucose 1,6-bisphosphate contacts are provided by aspartate 356, arginine 357, threonine 420, glutamate 439, serine 441, and lysine 452.

This sequence belongs to the phosphohexose mutase family. Monomer. Mg(2+) serves as cofactor.

The protein resides in the plastid. The protein localises to the chloroplast. It catalyses the reaction alpha-D-glucose 1-phosphate = alpha-D-glucose 6-phosphate. The catalysed reaction is O-phospho-L-seryl-[protein] + alpha-D-glucose 1-phosphate = alpha-D-glucose 1,6-bisphosphate + L-seryl-[protein]. It carries out the reaction alpha-D-glucose 1,6-bisphosphate + L-seryl-[protein] = O-phospho-L-seryl-[protein] + alpha-D-glucose 6-phosphate. Inhibited by the Calvin cycle intermediates fructose-1,6-bisphosphate and ribulose-1,5-bisphosphate. Its function is as follows. Catalyzes the reversible isomerization of alpha-D-glucose 1-phosphate to alpha-D-glucose 6-phosphate. The mechanism proceeds via the intermediate compound alpha-D-glucose 1,6-bisphosphate. This enzyme participates in both the breakdown and synthesis of glucose. The chain is Phosphoglucomutase, chloroplastic (PGMP) from Brassica napus (Rape).